A 404-amino-acid chain; its full sequence is MTEVTELMRPEGEALNTKEVLLNLGPQHPSTHGVLRLVLQLDGEYVERIDPHIGYLHRGTEKLAESFTYTQIFPLTDRLDYLCPPSNNLAFALAVEKLLGIEAPIRAQYIRVMMAELARISGHLLITGALPMDLGAMTALLYAMREREMIMDLLEMITGARMHTSYCRVGGVREDLPDGFLPKIREFCEIFPNRIRDYERLIENNRVFLSRTQGIGVISAADAVDLGLSGPNLRASGVDWDIRRDEPYEIYDRLDFDVITREEGDCYARWLCRVDEMRESIRLIEQCMEQMPEGPFQVDIPTIAFPVDKERVHCSMEALIQHFDLSAYGFDVPAGEVYSVIEAPKGELGFYIISDGSPKPFRMKVRAPSFVNLQALFGVTNARYLADMIAVLGSLDPVMAEVDK.

Belongs to the complex I 49 kDa subunit family. As to quaternary structure, NDH-1 is composed of 14 different subunits. Subunits NuoB, C, D, E, F, and G constitute the peripheral sector of the complex.

It is found in the cell inner membrane. The catalysed reaction is a quinone + NADH + 5 H(+)(in) = a quinol + NAD(+) + 4 H(+)(out). NDH-1 shuttles electrons from NADH, via FMN and iron-sulfur (Fe-S) centers, to quinones in the respiratory chain. The immediate electron acceptor for the enzyme in this species is believed to be ubiquinone. Couples the redox reaction to proton translocation (for every two electrons transferred, four hydrogen ions are translocated across the cytoplasmic membrane), and thus conserves the redox energy in a proton gradient. This is NADH-quinone oxidoreductase subunit D 2 from Sinorhizobium medicae (strain WSM419) (Ensifer medicae).